Reading from the N-terminus, the 261-residue chain is Zinc import ATP-binding protein ZnuC (261 aa).

The ABC transporter domain maps to 5–220 (ISLKALSVTF…PSYIALFGSA (216 aa)). 37–44 (GPNGAGKS) is an ATP binding site. Residues 236 to 261 (HHDLAGQPVSGDATQCNHHHHGHHHD) are disordered. The span at 252–261 (NHHHHGHHHD) shows a compositional bias: basic residues.

The protein belongs to the ABC transporter superfamily. Zinc importer (TC 3.A.1.15.5) family. As to quaternary structure, the complex is composed of two ATP-binding proteins (ZnuC), two transmembrane proteins (ZnuB) and a solute-binding protein (ZnuA).

Its subcellular location is the cell inner membrane. It catalyses the reaction Zn(2+)(out) + ATP(in) + H2O(in) = Zn(2+)(in) + ADP(in) + phosphate(in) + H(+)(in). Part of the ABC transporter complex ZnuABC involved in zinc import. Responsible for energy coupling to the transport system. In Vibrio vulnificus (strain CMCP6), this protein is Zinc import ATP-binding protein ZnuC.